Reading from the N-terminus, the 445-residue chain is Argininosuccinate synthase (445 aa).

Residues 17-25 and A43 each bind ATP; that span reads AFSGGLDTS. Y99 provides a ligand contact to L-citrulline. ATP is bound by residues G129 and T131. L-aspartate is bound by residues T131, N135, and D136. N135 serves as a coordination point for L-citrulline. D136 is a binding site for ATP. L-citrulline contacts are provided by R139 and S192. D194 provides a ligand contact to ATP. The L-citrulline site is built by T201, E203, and E280.

The protein belongs to the argininosuccinate synthase family. Type 2 subfamily. Homotetramer.

The protein resides in the cytoplasm. It carries out the reaction L-citrulline + L-aspartate + ATP = 2-(N(omega)-L-arginino)succinate + AMP + diphosphate + H(+). Its pathway is amino-acid biosynthesis; L-arginine biosynthesis; L-arginine from L-ornithine and carbamoyl phosphate: step 2/3. In Rhodopseudomonas palustris (strain BisB5), this protein is Argininosuccinate synthase.